Here is a 204-residue protein sequence, read N- to C-terminus: LexA repressor (204 aa).

Positions 31 to 51 (VREICAKVGLSSTSTVHGHLS) form a DNA-binding region, H-T-H motif. Active-site for autocatalytic cleavage activity residues include Ser-128 and Lys-165.

It belongs to the peptidase S24 family. In terms of assembly, homodimer.

It carries out the reaction Hydrolysis of Ala-|-Gly bond in repressor LexA.. Its function is as follows. Represses a number of genes involved in the response to DNA damage (SOS response), including recA and lexA. In the presence of single-stranded DNA, RecA interacts with LexA causing an autocatalytic cleavage which disrupts the DNA-binding part of LexA, leading to derepression of the SOS regulon and eventually DNA repair. This chain is LexA repressor, found in Clostridium acetobutylicum (strain ATCC 824 / DSM 792 / JCM 1419 / IAM 19013 / LMG 5710 / NBRC 13948 / NRRL B-527 / VKM B-1787 / 2291 / W).